The chain runs to 201 residues: Ribonuclease HII (201 aa).

In terms of domain architecture, RNase H type-2 spans 10 to 200 (LIEAGCDEAG…LGTDPQLEIP (191 aa)). The a divalent metal cation site is built by Asp16, Glu17, and Asp108.

This sequence belongs to the RNase HII family. It depends on Mn(2+) as a cofactor. Requires Mg(2+) as cofactor.

The protein resides in the cytoplasm. The enzyme catalyses Endonucleolytic cleavage to 5'-phosphomonoester.. Functionally, endonuclease that specifically degrades the RNA of RNA-DNA hybrids. In Phocaeicola vulgatus (strain ATCC 8482 / DSM 1447 / JCM 5826 / CCUG 4940 / NBRC 14291 / NCTC 11154) (Bacteroides vulgatus), this protein is Ribonuclease HII.